A 358-amino-acid polypeptide reads, in one-letter code: Short chain dehydrogenase sor7 (358 aa).

Residues 1–22 are disordered; that stretch reads MSSPAIGQPPIPPTPTDANISG. Residues leucine 34, aspartate 88, asparagine 115, tyrosine 206, lysine 210, valine 238, and threonine 240 each contribute to the NADP(+) site. Residue tyrosine 206 is the Proton donor of the active site. The active-site Lowers pKa of active site Tyr is lysine 210.

Belongs to the short-chain dehydrogenases/reductases (SDR) family.

The protein operates within secondary metabolite biosynthesis. Functionally, short chain dehydrogenase; part of the SOR gene cluster that mediates the biosynthesis of sorbicillinoids, a diverse group of yellow secondary metabolites that restrict growth of competing pathogenic fungi but not of bacteria. Sorbicillinoids biosynthesis requires the action of two PKSs. The SOR cluster is required for the production of trichodimerol and dihydrotrichotetronin, with sor2 being sufficient for production of trichodimerol, but not dihydrotrichotetronin in the light. Sor1 iteratively combines three acetyl units and the growing chain is modified by the ketoacyl reductase subunit, and optional by the enoyl reductase subunit in the second cycle. The polyketide is then handed over to the PKS sor2, which adds three more acetyl units, and two methyl groups. Sor2 releases an aldehyde, which undergoes spontaneous cyclization resulting in the formation of sorbicillin or 2',3'-dihydrosorbicillin. The monooxygenase sor5 oxidizes sorbicillin and 2',3'-dihydrosorbicillin to 2',3'-dihydrosorbicillinol and sorbicillinol, respectively. The oxidoreductase sor8 further converts sorbicillinol into oxosorbicillinol. Sorbicillinol is the building block for the other sorbicillinoids such as disorbicillinol, bisvertinolon, dihydrobisvertinolone, and dihydrotrichotetronine. This is Short chain dehydrogenase sor7 from Hypocrea jecorina (strain QM6a) (Trichoderma reesei).